Here is a 124-residue protein sequence, read N- to C-terminus: Ribonuclease pancreatic (124 aa).

A compositionally biased stretch (basic and acidic residues) spans 1–13; the sequence is KETAAAKFERQHM. The interval 1 to 25 is disordered; it reads KETAAAKFERQHMDSSTSSASSSNY. Substrate contacts are provided by lysine 7 and arginine 10. Histidine 12 (proton acceptor) is an active-site residue. 4 disulfide bridges follow: cysteine 26–cysteine 84, cysteine 40–cysteine 95, cysteine 58–cysteine 110, and cysteine 65–cysteine 72. Residues 41-45, lysine 66, and arginine 85 each bind substrate; that span reads KPVNT. Histidine 119 acts as the Proton donor in catalysis.

The protein belongs to the pancreatic ribonuclease family. As to quaternary structure, monomer. Interacts with and forms tight 1:1 complexes with RNH1. Dimerization of two such complexes may occur. Interaction with RNH1 inhibits this protein. As to expression, pancreas.

Its subcellular location is the secreted. The catalysed reaction is an [RNA] containing cytidine + H2O = an [RNA]-3'-cytidine-3'-phosphate + a 5'-hydroxy-ribonucleotide-3'-[RNA].. It catalyses the reaction an [RNA] containing uridine + H2O = an [RNA]-3'-uridine-3'-phosphate + a 5'-hydroxy-ribonucleotide-3'-[RNA].. Its function is as follows. Endonuclease that catalyzes the cleavage of RNA on the 3' side of pyrimidine nucleotides. Acts on single-stranded and double-stranded RNA. The polypeptide is Ribonuclease pancreatic (RNASE1) (Tragelaphus oryx (Eland)).